The chain runs to 575 residues: uncharacterized protein (575 aa).

A run of 6 helical transmembrane segments spans residues 16–36, 50–70, 132–152, 154–174, 243–263, and 264–284; these read FFLDFFSAIAGGLMELSFPLI, WGLIIATSIGLFAVYALSSAL, PEDLFIAVMTILGAFGVMLFI, WQLALLTFIIMPIVIWLALYF, ISYMLTRFVTLFVLLCGTWFV, and IRGSLSYGEFVAFVLLTNVLF. Residues 16–299 enclose the ABC transmembrane type-1 domain; the sequence is FFLDFFSAIA…INAIIEMYPR (284 aa). Positions 333–567 constitute an ABC transporter domain; that stretch reads IRYKHVSFGY…GGLYSRLHQA (235 aa). Position 366–373 (366–373) interacts with ATP; the sequence is GPSGAGKS.

This sequence belongs to the ABC transporter superfamily.

The protein localises to the cell membrane. It is found in the membrane raft. This is an uncharacterized protein from Bacillus subtilis (strain 168).